A 194-amino-acid polypeptide reads, in one-letter code: Cupin-domain-containing oxidoreductase virC (194 aa).

A Cupin type-2 domain is found at 106 to 175; that stretch reads IDFAPNVISP…GTLPGRMMWV (70 aa).

The protein belongs to the virC family.

It participates in secondary metabolite biosynthesis. In terms of biological role, cupin-domain-containing oxidoreductase; part of the gene cluster that mediates the biosynthesis of virensols and trichoxide, fungal natural products that contain or are derived from a salicylaldehyde core. The pathway begins with the synthesis of the reduced chain in virensol C by the highly reducing polyketide synthase virA via condensation of one acetate and 8 malonate units. VirA has interesting programming rules since the first 2 ketides are fully reduced, the 3 following ketides undergo beta-dehydration, and the last 3 ketides are only reduced to beta-hydroxys to yield the trihydroxy portion. The production of aldehyde virensol C by virA alone is surprising, since virA does not contain a reductase (R) domain that is typically associated with reductive product release in HRPKS. The cupin-domain enzyme virC is involved in enhancing virA product turnover. The short-chain dehydrogenase virB then oxidizes the C-7 alcohol of virensol C to a ketone, yielding virensol D. Virensol D is further transformed to salicylaldehyde 5-deoxyaurocitrin by the short-chain dehydrogenase virD. VirD catalyzes the dehydrogenation of C-3 to form the beta-ketone aldehyde, which is followed by the generation of the nucleophilic C-2 that is required for the intramolecular aldol condensation between C-2 and C-7, itself followed by dehydration and aromatization which leads to salicylaldehyde 5-deoxyaurocitrin. While the dehydrogenation of virensol D is definitely catalyzed by virD, the aldol condensation and dehydration may be uncatalyzed or assisted by virD. The short chain dehydrogenase virG then converts salicylaldehyde 5-deoxyaurocitrin into virensol B which is further hydroxylated by the cytochrome P450 monooxygenase virE to yield the hydroquinone virensol A. VirI then may oxidize virensol A to form the quinone, while virH performs the epoxidation. Finally, the two remaining short-chain dehydrogenases, virK and virL, are probably responsible for reducing the ketones to the corresponding alcohols to furnish the epoxycyclohexanol structure in trichoxide. This chain is Cupin-domain-containing oxidoreductase virC, found in Hypocrea virens (strain Gv29-8 / FGSC 10586) (Gliocladium virens).